A 454-amino-acid chain; its full sequence is Tubulin gamma chain (454 aa).

142–148 (AGGTGSG) contributes to the GTP binding site.

This sequence belongs to the tubulin family.

The protein localises to the cytoplasm. It localises to the cytoskeleton. It is found in the microtubule organizing center. Its subcellular location is the spindle pole body. Functionally, tubulin is the major constituent of microtubules. The gamma chain is found at microtubule organizing centers (MTOC) such as the spindle pole or the centrosome, suggesting that it is involved in the minus-end nucleation of microtubule assembly. Interacts physically with beta-tubulin and is involved in microtubule function. The chain is Tubulin gamma chain (mipA) from Emericella nidulans (strain FGSC A4 / ATCC 38163 / CBS 112.46 / NRRL 194 / M139) (Aspergillus nidulans).